Here is a 75-residue protein sequence, read N- to C-terminus: Dermaseptin-SP4 (75 aa).

The signal sequence occupies residues 1–22 (MAFLKKSLFLVLFLGLVSLSMC). A propeptide spanning residues 23-45 (EEEKRENEVEEEQEDDEQSELRR) is cleaved from the precursor. Proline 72 carries the post-translational modification Proline amide. Residues 74 to 75 (EQ) constitute a propeptide that is removed on maturation.

Belongs to the frog skin active peptide (FSAP) family. Dermaseptin subfamily. As to expression, expressed by the skin glands.

Its subcellular location is the secreted. It is found in the target cell membrane. In terms of biological role, antimicrobial peptide with activity against Gram-positive and Gram-negative bacteria and fungi. Has been tested against E.coli (MIC=47.25-128 uM), S.aureus (MIC=189-512 uM), K.pneumoniae (MIC=189 uM) and C.albicans (MIC&gt;189 uM). Probably acts by disturbing membrane functions with its alpha-helical amphipathic structure. May penetrate bacterial membranes, but stay at the mammalian membrane surface. Shows a weak hemolytic activity. The protein is Dermaseptin-SP4 of Agalychnis spurrelli (Gliding leaf frog).